We begin with the raw amino-acid sequence, 112 residues long: UPF0251 protein MA_4245 (112 aa).

The protein belongs to the UPF0251 family.

The protein is UPF0251 protein MA_4245 of Methanosarcina acetivorans (strain ATCC 35395 / DSM 2834 / JCM 12185 / C2A).